The chain runs to 908 residues: Protein translocase subunit SecA (908 aa).

Residues Q87, 105–109 (GEGKT), and D507 each bind ATP. A disordered region spans residues 860-898 (EALGNAEESDEASDQSVKTFERAGAKVGRNDPCPCGSGK). Zn(2+) is bound by residues C892, C894, C903, and H904.

The protein belongs to the SecA family. Monomer and homodimer. Part of the essential Sec protein translocation apparatus which comprises SecA, SecYEG and auxiliary proteins SecDF-YajC and YidC. The cofactor is Zn(2+).

It is found in the cell inner membrane. It localises to the cytoplasm. It catalyses the reaction ATP + H2O + cellular proteinSide 1 = ADP + phosphate + cellular proteinSide 2.. Its function is as follows. Part of the Sec protein translocase complex. Interacts with the SecYEG preprotein conducting channel. Has a central role in coupling the hydrolysis of ATP to the transfer of proteins into and across the cell membrane, serving both as a receptor for the preprotein-SecB complex and as an ATP-driven molecular motor driving the stepwise translocation of polypeptide chains across the membrane. The sequence is that of Protein translocase subunit SecA from Methylobacillus flagellatus (strain ATCC 51484 / DSM 6875 / VKM B-1610 / KT).